The following is a 31-amino-acid chain: Acetyl-CoA carboxylase (31 aa).

The interval 1–31 (RISSSVIAHKTQLDSGKREVYSSHMQLGGPK) is disordered. Residues 11–21 (TQLDSGKREVY) are compositionally biased toward basic and acidic residues.

The catalysed reaction is hydrogencarbonate + acetyl-CoA + ATP = malonyl-CoA + ADP + phosphate + H(+). It functions in the pathway lipid metabolism; malonyl-CoA biosynthesis; malonyl-CoA from acetyl-CoA: step 1/1. This Catharanthus roseus (Madagascar periwinkle) protein is Acetyl-CoA carboxylase.